Reading from the N-terminus, the 304-residue chain is Acetylglutamate kinase (304 aa).

Residues 82-83 (GG), Arg-104, and Asn-197 contribute to the substrate site.

It belongs to the acetylglutamate kinase family. ArgB subfamily.

The protein localises to the cytoplasm. It catalyses the reaction N-acetyl-L-glutamate + ATP = N-acetyl-L-glutamyl 5-phosphate + ADP. It functions in the pathway amino-acid biosynthesis; L-arginine biosynthesis; N(2)-acetyl-L-ornithine from L-glutamate: step 2/4. In terms of biological role, catalyzes the ATP-dependent phosphorylation of N-acetyl-L-glutamate. This Prochlorococcus marinus (strain SARG / CCMP1375 / SS120) protein is Acetylglutamate kinase.